We begin with the raw amino-acid sequence, 620 residues long: Notoamide biosynthesis transcriptional activator notL' (620 aa).

The disordered stretch occupies residues 1–26; that stretch reads MPPSSKSRRLPPAASDSAASDAQKRR. Positions 33 to 59 form a DNA-binding region, zn(2)-C6 fungal-type; sequence CSACKARKLKCTGAPPCANCVKSRIEC. The interval 591–620 is disordered; it reads ETGAFFLDPDQPSGNSTPIKSETPEGTAIS.

The protein localises to the nucleus. In terms of biological role, transcription factor that probably regulates the expression of the gene cluster that mediates the biosynthesis of notoamide, a fungal indole alkaloid that belongs to a family of natural products containing a characteristic bicyclo[2.2.2]diazaoctane core. The polypeptide is Notoamide biosynthesis transcriptional activator notL' (Aspergillus versicolor).